The chain runs to 172 residues: Glutamyl-tRNA(Gln) amidotransferase subunit C-4, mitochondrial (172 aa).

A mitochondrion-targeting transit peptide spans 1–23 (MIRIPFHLRQTPGRTLHSLVRSF). The segment at 51-73 (PSKVPQRPHKSTIDGQSTPTRIP) is disordered.

This sequence belongs to the GatC family. Subunit of the heterotrimeric GatCAB amidotransferase (AdT) complex, composed of A, B and C subunits.

It localises to the mitochondrion. The catalysed reaction is L-glutamyl-tRNA(Gln) + L-glutamine + ATP + H2O = L-glutaminyl-tRNA(Gln) + L-glutamate + ADP + phosphate + H(+). Its function is as follows. Allows the formation of correctly charged Gln-tRNA(Gln) through the transamidation of misacylated Glu-tRNA(Gln) in the mitochondria. The reaction takes place in the presence of glutamine and ATP through an activated gamma-phospho-Glu-tRNA(Gln). This Culex quinquefasciatus (Southern house mosquito) protein is Glutamyl-tRNA(Gln) amidotransferase subunit C-4, mitochondrial.